The sequence spans 214 residues: Glycerol-3-phosphate acyltransferase (214 aa).

Transmembrane regions (helical) follow at residues Leu4–Ala24, Ala52–Val72, Asp82–Phe102, Leu118–Phe138, and Phe159–Trp179.

This sequence belongs to the PlsY family. In terms of assembly, probably interacts with PlsX.

Its subcellular location is the cell inner membrane. It carries out the reaction an acyl phosphate + sn-glycerol 3-phosphate = a 1-acyl-sn-glycero-3-phosphate + phosphate. It participates in lipid metabolism; phospholipid metabolism. Functionally, catalyzes the transfer of an acyl group from acyl-phosphate (acyl-PO(4)) to glycerol-3-phosphate (G3P) to form lysophosphatidic acid (LPA). This enzyme utilizes acyl-phosphate as fatty acyl donor, but not acyl-CoA or acyl-ACP. This is Glycerol-3-phosphate acyltransferase from Paraburkholderia xenovorans (strain LB400).